A 328-amino-acid chain; its full sequence is Methionyl-tRNA formyltransferase (328 aa).

110-113 contacts (6S)-5,6,7,8-tetrahydrofolate; that stretch reads SLLP.

The protein belongs to the Fmt family.

It catalyses the reaction L-methionyl-tRNA(fMet) + (6R)-10-formyltetrahydrofolate = N-formyl-L-methionyl-tRNA(fMet) + (6S)-5,6,7,8-tetrahydrofolate + H(+). Its function is as follows. Attaches a formyl group to the free amino group of methionyl-tRNA(fMet). The formyl group appears to play a dual role in the initiator identity of N-formylmethionyl-tRNA by promoting its recognition by IF2 and preventing the misappropriation of this tRNA by the elongation apparatus. The protein is Methionyl-tRNA formyltransferase of Prochlorococcus marinus (strain MIT 9312).